The chain runs to 862 residues: Valine--tRNA ligase (862 aa).

The short motif at 44-53 (NVTGSLHMGH) is the 'HIGH' region element. Residues Cys-176, Cys-179, Cys-344, Cys-347, Cys-417, Cys-420, Cys-438, and Cys-441 each contribute to the Zn(2+) site. The 'KMSKS' region signature appears at 528 to 532 (KMSKS). Lys-531 provides a ligand contact to ATP. A coiled-coil region spans residues 802-862 (RRRQEKRLKE…RIREALSQIG (61 aa)).

It belongs to the class-I aminoacyl-tRNA synthetase family. ValS type 1 subfamily. Monomer. Zn(2+) serves as cofactor.

It localises to the cytoplasm. It catalyses the reaction tRNA(Val) + L-valine + ATP = L-valyl-tRNA(Val) + AMP + diphosphate. In terms of biological role, catalyzes the attachment of valine to tRNA(Val). As ValRS can inadvertently accommodate and process structurally similar amino acids such as threonine, to avoid such errors, it has a 'posttransfer' editing activity that hydrolyzes mischarged Thr-tRNA(Val) in a tRNA-dependent manner. This is Valine--tRNA ligase from Thermus thermophilus (strain ATCC 27634 / DSM 579 / HB8).